A 214-amino-acid polypeptide reads, in one-letter code: DNA-directed RNA polymerase subunit alpha (214 aa).

This sequence belongs to the RNA polymerase alpha chain family. In terms of assembly, in plastids the minimal PEP RNA polymerase catalytic core is composed of four subunits: alpha, beta, beta', and beta''. When a (nuclear-encoded) sigma factor is associated with the core the holoenzyme is formed, which can initiate transcription.

It is found in the plastid. It localises to the chloroplast. The catalysed reaction is RNA(n) + a ribonucleoside 5'-triphosphate = RNA(n+1) + diphosphate. DNA-dependent RNA polymerase catalyzes the transcription of DNA into RNA using the four ribonucleoside triphosphates as substrates. This Euglena viridis (Cercaria viridis) protein is DNA-directed RNA polymerase subunit alpha (rpoA).